The primary structure comprises 386 residues: MNIHEYQAKEILHKFNVPVPKGFVAMSAEEAETKINQLKSDVLVVKAQIHAGGRGKAGGVKLAKSAEEAQQFVKGMLGITLVTHQTGPNGQQVRRVYIEEGSSIKKEYYLSIVIDPKLSRPAFIFSSEGGMDIEEVAKNFPTKIVKLDIDYAADFASFDSRKLSNIFNLSPEQIEKITNVAKNIYDTFIATDANQIEINPLVETNSGDFIALDAKISFDDNALYRHPEIVELRDYDEEVKEEIEASKHGLSYIKMDGNIGCMVNGAGLAMATMDIIKYYGAEPANFLDVGGGASKETVTEAFKIILSDSNVKGILVNIFGGIMRCDIIASGIVEAAKGMSIKVPLVVRLSGTNFEKGKRILEESGLNIIAADELDEAAQKIVKEVE.

The ATP-grasp domain maps to 9-244 (KEILHKFNVP…YDEEVKEEIE (236 aa)). ATP is bound by residues lysine 46, 53 to 55 (GRG), glutamate 99, serine 102, and glutamate 107. Positions 199 and 213 each coordinate Mg(2+). Substrate is bound by residues asparagine 264 and 321–323 (GIM).

Belongs to the succinate/malate CoA ligase beta subunit family. As to quaternary structure, heterotetramer of two alpha and two beta subunits. It depends on Mg(2+) as a cofactor.

The enzyme catalyses succinate + ATP + CoA = succinyl-CoA + ADP + phosphate. The catalysed reaction is GTP + succinate + CoA = succinyl-CoA + GDP + phosphate. It participates in carbohydrate metabolism; tricarboxylic acid cycle; succinate from succinyl-CoA (ligase route): step 1/1. In terms of biological role, succinyl-CoA synthetase functions in the citric acid cycle (TCA), coupling the hydrolysis of succinyl-CoA to the synthesis of either ATP or GTP and thus represents the only step of substrate-level phosphorylation in the TCA. The beta subunit provides nucleotide specificity of the enzyme and binds the substrate succinate, while the binding sites for coenzyme A and phosphate are found in the alpha subunit. The chain is Succinate--CoA ligase [ADP-forming] subunit beta from Wolbachia sp. subsp. Brugia malayi (strain TRS).